A 146-amino-acid chain; its full sequence is Large ribosomal subunit protein uL15 (146 aa).

Residues Met1–Pro56 are disordered. Composition is skewed to gly residues over residues Gln21–Gln35 and Ser42–Gly52.

The protein belongs to the universal ribosomal protein uL15 family. In terms of assembly, part of the 50S ribosomal subunit.

Binds to the 23S rRNA. The protein is Large ribosomal subunit protein uL15 of Carboxydothermus hydrogenoformans (strain ATCC BAA-161 / DSM 6008 / Z-2901).